We begin with the raw amino-acid sequence, 492 residues long: B3 domain-containing protein REM3 (492 aa).

The TF-B3 1 DNA-binding region spans Asn12 to Ser104. Over residues Phe105–Asp116 the composition is skewed to low complexity. The interval Phe105 to Lys134 is disordered. Acidic residues predominate over residues Tyr117 to Ser131. DNA-binding regions (TF-B3) lie at residues Tyr154–Lys250 and Phe286–Glu382. Basic and acidic residues predominate over residues Ile385–Gly395. Residues Ile385–Leu427 form a disordered region.

It localises to the nucleus. The chain is B3 domain-containing protein REM3 (REM3) from Arabidopsis thaliana (Mouse-ear cress).